Consider the following 257-residue polypeptide: ECF RNA polymerase sigma factor SigE (257 aa).

Positions 87 to 153 are sigma-70 factor domain-2; the sequence is LVRQHADRVY…FLDMVRRRAR (67 aa). The short motif at 111-114 is the Polymerase core binding element; it reads DLTQ. Positions 186-236 are sigma-70 factor domain-4; sequence LQAALASLPPEFRAAVVLCDIEGLSYEEIGATLGVKLGTVRSRIHRGRQAL. A DNA-binding region (H-T-H motif) is located at residues 211 to 230; sequence YEEIGATLGVKLGTVRSRIH.

The protein belongs to the sigma-70 factor family. ECF subfamily. Interacts transiently with the RNA polymerase catalytic core formed by RpoA, RpoB, RpoC and RpoZ (2 alpha, 1 beta, 1 beta' and 1 omega subunit) to form the RNA polymerase holoenzyme that can initiate transcription. Interacts (via sigma-70 factor domain 4) with cognate anti-sigma-E factor RseA under reducing conditions, which stops the sigma factor from functioning.

In terms of biological role, sigma factors are initiation factors that promote the attachment of RNA polymerase to specific initiation sites and are then released. Extracytoplasmic function (ECF) sigma factors are held in an inactive form by an anti-sigma factor until released. Responds to surface stress (H(2)O(2)). The protein is ECF RNA polymerase sigma factor SigE (sigE) of Mycobacterium tuberculosis (strain ATCC 35801 / TMC 107 / Erdman).